The chain runs to 233 residues: tRNA (guanine-N(7)-)-methyltransferase (233 aa).

A disordered region spans residues Met1–Pro22. Glu64, Glu89, Asp116, and Asp138 together coordinate S-adenosyl-L-methionine. The active site involves Asp138. Substrate contacts are provided by residues Lys142, Asp174, and Thr212–Glu215.

Belongs to the class I-like SAM-binding methyltransferase superfamily. TrmB family.

It catalyses the reaction guanosine(46) in tRNA + S-adenosyl-L-methionine = N(7)-methylguanosine(46) in tRNA + S-adenosyl-L-homocysteine. It participates in tRNA modification; N(7)-methylguanine-tRNA biosynthesis. Catalyzes the formation of N(7)-methylguanine at position 46 (m7G46) in tRNA. The protein is tRNA (guanine-N(7)-)-methyltransferase of Brucella melitensis biotype 1 (strain ATCC 23456 / CCUG 17765 / NCTC 10094 / 16M).